The following is a 427-amino-acid chain: MRRIRLNLQNAINEEKLKEYVSEVEQINTKMNNLSLEGFEYLGWKDLPENINKNEIDKIIETANFFKKEGIEVLVVIGIGGSFLGAKSAMDFIQGNYPTKKNMEIIFAGTSISSTELTQLLYYVENKKFAINVISKSGTTLEPAIAFREFRNLLNSRLGENNAKRYIVATTDANKGLLFEMAKEKGYARFVVPDNVGGRFSVLTPVGLLPLACAGIDIEKLLEGAKEANALYKNSNLLENDAYKYAVARFLLQKKFPVEMLVSYEPNHMFLLEWWKQLFGESEGKQGKGILPHSAIFTRDLHSLGQFIQDGSKIMFETVIWVDKPIFDLKIEKEIEDLDKLNYLTNKSLHQINKAAFEATVEAHTKVGLVPNIILELEDSSEKTLGALFMFFERAVAMSGYLLKVNPFNQPGVEVYKSNLFKILEKK.

Residue Glu-281 is the Proton donor of the active site. Catalysis depends on residues His-302 and Lys-417.

Belongs to the GPI family.

The protein localises to the cytoplasm. The enzyme catalyses alpha-D-glucose 6-phosphate = beta-D-fructose 6-phosphate. It participates in carbohydrate biosynthesis; gluconeogenesis. It functions in the pathway carbohydrate degradation; glycolysis; D-glyceraldehyde 3-phosphate and glycerone phosphate from D-glucose: step 2/4. Catalyzes the reversible isomerization of glucose-6-phosphate to fructose-6-phosphate. This Mycoplasmopsis pulmonis (strain UAB CTIP) (Mycoplasma pulmonis) protein is Glucose-6-phosphate isomerase.